The chain runs to 197 residues: Probable nicotinate-nucleotide adenylyltransferase (197 aa).

This sequence belongs to the NadD family.

The enzyme catalyses nicotinate beta-D-ribonucleotide + ATP + H(+) = deamido-NAD(+) + diphosphate. It participates in cofactor biosynthesis; NAD(+) biosynthesis; deamido-NAD(+) from nicotinate D-ribonucleotide: step 1/1. In terms of biological role, catalyzes the reversible adenylation of nicotinate mononucleotide (NaMN) to nicotinic acid adenine dinucleotide (NaAD). In Borrelia garinii subsp. bavariensis (strain ATCC BAA-2496 / DSM 23469 / PBi) (Borreliella bavariensis), this protein is Probable nicotinate-nucleotide adenylyltransferase.